Consider the following 87-residue polypeptide: MKPGIHPDYREVVFQDMSNGFKFITRSTIQTRETIELEGKTYPLAKIEVSSESHSFYTGQQKIMDTAGRVEKFKNKFGSRASGKVAK.

It belongs to the bacterial ribosomal protein bL31 family. Type B subfamily. As to quaternary structure, part of the 50S ribosomal subunit.

This chain is Large ribosomal subunit protein bL31B, found in Burkholderia multivorans (strain ATCC 17616 / 249).